The sequence spans 80 residues: Trefoil factor 3 (80 aa).

A signal peptide spans 1-23 (MEARVLWLLVVVLVLGSSSLAVA). The P-type domain occupies 30-73 (NLCEVPPKDRVDCGYPEITSEQCVNRGCCFDSSIHGVPWCFKPL). Cystine bridges form between Cys32-Cys58, Cys42-Cys57, and Cys52-Cys69.

As to quaternary structure, monomer. Homodimer; disulfide-linked.

It localises to the secreted. The protein resides in the extracellular space. The protein localises to the extracellular matrix. It is found in the cytoplasm. Involved in the maintenance and repair of the intestinal mucosa. Promotes the mobility of epithelial cells in healing processes (motogen). The sequence is that of Trefoil factor 3 (TFF3) from Canis lupus familiaris (Dog).